Consider the following 311-residue polypeptide: tRNA-cytidine(32) 2-sulfurtransferase (311 aa).

A PP-loop motif motif is present at residues 47–52 (SGGKDS). [4Fe-4S] cluster contacts are provided by Cys122, Cys125, and Cys213.

This sequence belongs to the TtcA family. As to quaternary structure, homodimer. Mg(2+) is required as a cofactor. The cofactor is [4Fe-4S] cluster.

The protein localises to the cytoplasm. It carries out the reaction cytidine(32) in tRNA + S-sulfanyl-L-cysteinyl-[cysteine desulfurase] + AH2 + ATP = 2-thiocytidine(32) in tRNA + L-cysteinyl-[cysteine desulfurase] + A + AMP + diphosphate + H(+). Its pathway is tRNA modification. Catalyzes the ATP-dependent 2-thiolation of cytidine in position 32 of tRNA, to form 2-thiocytidine (s(2)C32). The sulfur atoms are provided by the cysteine/cysteine desulfurase (IscS) system. The chain is tRNA-cytidine(32) 2-sulfurtransferase from Escherichia coli (strain SMS-3-5 / SECEC).